The primary structure comprises 38 residues: Large ribosomal subunit protein bL36 (38 aa).

This sequence belongs to the bacterial ribosomal protein bL36 family.

This chain is Large ribosomal subunit protein bL36, found in Amoebophilus asiaticus (strain 5a2).